A 560-amino-acid polypeptide reads, in one-letter code: Synaptotagmin-5 (560 aa).

The helical transmembrane segment at 2–22 (GFIVGVVIGLLVGIAIIIGFV) threads the bilayer. Residues 67–249 (ERQKLTWLNH…WPVRKVIPII (183 aa)) enclose the SMP-LTD domain. The interval 227 to 523 (EETIRDAVED…YIGRCILTLT (297 aa)) is phospholipid binding. C2 domains are found at residues 243–364 (RKVI…DVWL) and 417–535 (TTDE…KDWY). Ca(2+) contacts are provided by Asp278, Asp284, Asp334, Glu336, Asp451, Asp457, Asp506, Asp508, and Asp513.

Belongs to the synaptotagmin family. Requires Ca(2+) as cofactor.

The protein resides in the membrane. In terms of biological role, may be involved in membrane trafficking. The chain is Synaptotagmin-5 (SYT5) from Arabidopsis thaliana (Mouse-ear cress).